The sequence spans 233 residues: B-cell lymphoma/leukemia 10 (233 aa).

Met-1 is subject to N-acetylmethionine. In terms of domain architecture, CARD spans 13–101 (LTEVKKDALE…QSFLIQKITD (89 aa)). Residues Lys-17, Lys-31, and Lys-63 each participate in a glycyl lysine isopeptide (Lys-Gly) (interchain with G-Cter in ubiquitin) cross-link. A Phosphoserine modification is found at Ser-138. Positions 185-233 (SSFSSATLPRPGDPGAPPLPPDLRLEEGGSCGNSSEMFLPLRSRALSRQ) are disordered. Residues 195-205 (PGDPGAPPLPP) show a composition bias toward pro residues.

As to quaternary structure, homomultimer; homooligomerized following recruitment by CARD domain-containing proteins that form a nucleating helical template that recruits BCL10 via CARD-CARD interaction. Self-associates by CARD-CARD interaction and interacts with other CARD-proteins such as CARD9, CARD10, CARD11 and CARD14. Forms a complex with CARD14 and MALT1; resulting in the formation of a CBM (CARD14-BCL10-MALT1) complex. Forms a complex with CARD11 and MALT1; resulting in the formation of a CBM (CARD11-BCL10-MALT1) complex. Forms a complex with CARD9 and MALT1; resulting in the formation of a CBM (CARD9-BCL10-MALT1) complex. Found in a membrane raft complex, at least composed of BCL10, CARD11, DPP4 and IKBKB. Binds caspase-9 with its C-terminal domain. Interacts with TRAF2 and BIRC2/c-IAP2. Interacts with PELI2 and SOCS3; these interactions may be mutually exclusive. In terms of processing, phosphorylated by IKBKB/IKKB. Post-translationally, ubiquitinated via both 'Lys-63'-linked and linear ('Met-1'-linked) polyubiquitin chains in response to T-cell receptor (TCR) activation. Ubiquitination is recognized by IKBKG/NEMO, the regulatory subunit of I-kappa-B kinase (IKK), and is required for TCR-induced NF-kappa-B activation. Linear ubiquitination at Lys-17, Lys-31 and Lys-63 is mediated by RNF31/HOIP; linear ubiquitination is recognized with much higher affinity than 'Lys-63'-linked ubiquitin by IKBKG/NEMO. CARD11 is required for linear ubiquitination by HOIP by promoting the targeting of BCL10 to RNF31/HOIP. Proteolytically cleaved by MALT1; required for T-cell activation. Highly expressed in heart, brain, spleen, lung, liver, skeletal muscle, kidney and testis. Detected in developing brain, olfactory epithelium, tongue, whisker follicles, salivary gland, heart, lung, liver and intestinal epithelia of stage 15 embryos.

The protein localises to the cytoplasm. The protein resides in the membrane raft. Its function is as follows. Plays a key role in both adaptive and innate immune signaling by bridging CARD domain-containing proteins to immune activation. Acts by channeling adaptive and innate immune signaling downstream of CARD domain-containing proteins CARD9, CARD11 and CARD14 to activate NF-kappa-B and MAP kinase p38 (MAPK11, MAPK12, MAPK13 and/or MAPK14) pathways which stimulate expression of genes encoding pro-inflammatory cytokines and chemokines. Recruited by activated CARD domain-containing proteins: homooligomerized CARD domain-containing proteins form a nucleating helical template that recruits BCL10 via CARD-CARD interaction, thereby promoting polymerization of BCL10, subsequent recruitment of MALT1 and formation of a CBM complex. This leads to activation of NF-kappa-B and MAP kinase p38 (MAPK11, MAPK12, MAPK13 and/or MAPK14) pathways which stimulate expression of genes encoding pro-inflammatory cytokines and chemokines. Activated by CARD9 downstream of C-type lectin receptors; CARD9-mediated signals are essential for antifungal immunity. Activated by CARD11 downstream of T-cell receptor (TCR) and B-cell receptor (BCR). Promotes apoptosis, pro-caspase-9 maturation and activation of NF-kappa-B via NIK and IKK. This Mus musculus (Mouse) protein is B-cell lymphoma/leukemia 10 (Bcl10).